A 55-amino-acid chain; its full sequence is Large ribosomal subunit protein bL33 (55 aa).

Belongs to the bacterial ribosomal protein bL33 family.

The chain is Large ribosomal subunit protein bL33 from Dehalococcoides mccartyi (strain ATCC BAA-2266 / KCTC 15142 / 195) (Dehalococcoides ethenogenes (strain 195)).